The following is a 228-amino-acid chain: Uracil-DNA glycosylase (228 aa).

The active-site Proton acceptor is the aspartate 65.

The protein belongs to the uracil-DNA glycosylase (UDG) superfamily. UNG family.

The protein localises to the cytoplasm. The catalysed reaction is Hydrolyzes single-stranded DNA or mismatched double-stranded DNA and polynucleotides, releasing free uracil.. Functionally, excises uracil residues from the DNA which can arise as a result of misincorporation of dUMP residues by DNA polymerase or due to deamination of cytosine. The chain is Uracil-DNA glycosylase from Lacticaseibacillus paracasei (strain ATCC 334 / BCRC 17002 / CCUG 31169 / CIP 107868 / KCTC 3260 / NRRL B-441) (Lactobacillus paracasei).